A 484-amino-acid chain; its full sequence is MATTTSLLSSCLCALLLAPLFSQGVDAWESRQGASRQCRFDRLQAFEPLRKVRSEAGDTEYFDERNEQFRCAGVFVIRRVIEPQGLVVPRYSNTPALAYIIQGKGYVGLTFPGCPATHQQQFQLFEQRQSDQAHKFRDEHQKIHEFRQGDVVALPASVAHWFYNGGDTPAVVVYVYDIKSFANQLEPRQKEFLLAGNNQRGQQIFEHSIFQHSGQNIFSGFNTEVLSEALGINTEASKRLQSQNDQRGDIIRVKHGLQLLKPTLTQRQEEHRQYQQVQYREGQYNGLDENFCTIKARVNIENPSRADYYNPRAGRITLLNNQKFPILNLIGMGAARVNLYQNALLSPFWNINAHSVVYIIQGSVRVQVANNQGRSVFNGVLHQGQLLIIPQNHAVIKKAEHNGCQYVAIKTISDPTVSWVAGKNSILRALPVDVIANAYRISRDEARRLKNNRADEIGPFTPRFPQKSQRGYQFLTEGLSLIGM.

The first 27 residues, 1–27 (MATTTSLLSSCLCALLLAPLFSQGVDA), serve as a signal peptide directing secretion. Intrachain disulfides connect Cys38/Cys71 and Cys114/Cys292. 2 consecutive Cupin type-1 domains span residues 43–238 (LQAF…EASK) and 298–447 (VNIE…DEAR).

This sequence belongs to the 11S seed storage protein (globulins) family. In terms of assembly, hexamer; each subunit is composed of an acidic and a basic chain derived from a single precursor and linked by a disulfide bond.

It is found in the protein storage vacuole. In terms of biological role, seed storage protein. In Oryza sativa subsp. japonica (Rice), this protein is Glutelin type-D 1.